The sequence spans 38 residues: Large ribosomal subunit protein bL36 (38 aa).

This sequence belongs to the bacterial ribosomal protein bL36 family.

In Chlorobium phaeobacteroides (strain BS1), this protein is Large ribosomal subunit protein bL36.